Reading from the N-terminus, the 383-residue chain is ATP phosphoribosyltransferase regulatory subunit (383 aa).

This sequence belongs to the class-II aminoacyl-tRNA synthetase family. HisZ subfamily. Heteromultimer composed of HisG and HisZ subunits.

It is found in the cytoplasm. Its pathway is amino-acid biosynthesis; L-histidine biosynthesis; L-histidine from 5-phospho-alpha-D-ribose 1-diphosphate: step 1/9. Its function is as follows. Required for the first step of histidine biosynthesis. May allow the feedback regulation of ATP phosphoribosyltransferase activity by histidine. The sequence is that of ATP phosphoribosyltransferase regulatory subunit from Cupriavidus metallidurans (strain ATCC 43123 / DSM 2839 / NBRC 102507 / CH34) (Ralstonia metallidurans).